The sequence spans 248 residues: Putative eukaryotic initiation factor 4A-like protein (248 aa).

A Q motif motif is present at residues 14–42 (VGFASLGLNEQLINNIKRYGITKLTPFQM). The Helicase ATP-binding domain maps to 45–239 (IKEIKENSNV…NTFIKIPKII (195 aa)). ATP is bound at residue 58–65 (SIEGTGRT). The DEAD box signature appears at 185–188 (DELD).

This sequence belongs to the DEAD box helicase family. eIF4A subfamily.

This Dictyostelium discoideum (Social amoeba) protein is Putative eukaryotic initiation factor 4A-like protein.